Reading from the N-terminus, the 82-residue chain is EMBRYO SURROUNDING FACTOR 1.2 (82 aa).

A signal peptide spans 1–23 (MKSQTVLISIFIFSFFALHQCMQ). Intrachain disulfides connect C40-C56, C45-C77, C54-C71, and C57-C64.

The protein belongs to the MEG family. In terms of tissue distribution, expressed exclusively in ovule embryo sacs and in early developing endosperms.

Maternally-contributed central cell peptide regulating suspensor development and correct auxin distribution in early developing embryos. In Arabidopsis thaliana (Mouse-ear cress), this protein is EMBRYO SURROUNDING FACTOR 1.2 (ESF1.2).